Here is a 373-residue protein sequence, read N- to C-terminus: MTGNDILLWDETLFKDLSVLEPDYLPEYFPHRDSQLNALRFALKPALRGMRPLNCLLVGPPGTGKTSAIMKTFREVEAHAPNVVTVKVNCQIDSTRFAVMSRIYRQLFGISPPNSGIAFRKLFETVVNFLVSSEKVLIVALDDLNYLCCEGHANEVMYSLLRAHEQYPGAKIGVIGIVNDASDLYCLDSRVNSVFLPEEVSFPRYEEGEILDILKDRVRYGFYPKVISDEVLKLVVSYVEKTGDLRVGIDLLRRSGFNAERKGRRMILFEDVEKAYEASKLLHLCRGISLLSDPEKQLLELIAKKDEIKAGELYKSFHELTQLGYTRFYGMVNRLQTLNYVDADFTGKGKRGRTRIIKTKYEAEDILNCLKKA.

ATP-binding positions include 63–67 (TGKTS), Tyr-205, and Arg-217.

The protein belongs to the CDC6/cdc18 family.

Involved in regulation of DNA replication. This Methanosarcina mazei (strain ATCC BAA-159 / DSM 3647 / Goe1 / Go1 / JCM 11833 / OCM 88) (Methanosarcina frisia) protein is ORC1-type DNA replication protein 2 (cdc6-2).